The sequence spans 527 residues: Amine oxidase [flavin-containing] A (527 aa).

An N-acetylmethionine modification is found at M1. The Cytoplasmic segment spans residues 1-497 (MESLQKTSDA…PSFWERNLPS (497 aa)). Phosphoserine is present on S383. At C406 the chain carries S-8alpha-FAD cysteine. A helical; Anchor for type IV membrane protein membrane pass occupies residues 498-518 (VSGLLKIVGFSTSITALWFVM). Residues 519-527 (YRFRLLSRS) lie on the Mitochondrial intermembrane side of the membrane. Residues 520–522 (RFR) form an interaction with membrane phospholipid headgroups region.

This sequence belongs to the flavin monoamine oxidase family. In terms of assembly, monomer, homo- or heterodimer (containing two subunits of similar size). Each subunit contains a covalently bound flavin. Enzymatically active as monomer. FAD serves as cofactor.

It localises to the mitochondrion outer membrane. It carries out the reaction a secondary aliphatic amine + O2 + H2O = a primary amine + an aldehyde + H2O2. It catalyses the reaction a primary methyl amine + O2 + H2O = an aldehyde + H2O2 + NH4(+). The catalysed reaction is (R)-adrenaline + O2 + H2O = (R)-3,4-dihydroxymandelaldehyde + methylamine + H2O2. The enzyme catalyses dopamine + O2 + H2O = 3,4-dihydroxyphenylacetaldehyde + H2O2 + NH4(+). It carries out the reaction tyramine + O2 + H2O = (4-hydroxyphenyl)acetaldehyde + H2O2 + NH4(+). It catalyses the reaction (R)-noradrenaline + O2 + H2O = (R)-3,4-dihydroxymandelaldehyde + H2O2 + NH4(+). The catalysed reaction is serotonin + O2 + H2O = (5-hydroxyindol-3-yl)acetaldehyde + H2O2 + NH4(+). The enzyme catalyses kynuramine + O2 + H2O = 3-(2-aminophenyl)-3-oxopropanal + H2O2 + NH4(+). It carries out the reaction tryptamine + O2 + H2O = indole-3-acetaldehyde + H2O2 + NH4(+). It catalyses the reaction 2-phenylethylamine + O2 + H2O = 2-phenylacetaldehyde + H2O2 + NH4(+). Functionally, catalyzes the oxidative deamination of primary and some secondary amine such as neurotransmitters, with concomitant reduction of oxygen to hydrogen peroxide and has important functions in the metabolism of neuroactive and vasoactive amines in the central nervous system and peripheral tissues. Preferentially oxidizes serotonin. Also catalyzes the oxidative deamination of kynuramine to 3-(2-aminophenyl)-3-oxopropanal that can spontaneously condense to 4-hydroxyquinoline. In Bos taurus (Bovine), this protein is Amine oxidase [flavin-containing] A.